The chain runs to 90 residues: Albumin-1 (90 aa).

Alanine 1 is a signal peptide. Cystine bridges form between cysteine 4–cysteine 21, cysteine 8–cysteine 23, and cysteine 16–cysteine 34. A propeptide spanning residues 40–47 (LSSVAKMI) is cleaved from the precursor.

Post-translationally, the C-terminal glycine may be removed from A1b.

A1b binds to basic 7S globulin (BG) and stimulates its phosphorylation activity. In Phaseolus angularis (Azuki bean), this protein is Albumin-1 (LEG).